Reading from the N-terminus, the 640-residue chain is ATP-dependent DNA helicase YoaA (640 aa).

Positions 16 to 278 constitute a Helicase ATP-binding domain; it reads ELSQNIKGFR…KDMQQLGTTS (263 aa). Residue 51 to 58 participates in ATP binding; the sequence is AGTGTGKT. C114 lines the [4Fe-4S] cluster pocket. The DEAH box signature appears at 125–128; that stretch reads GVLG. [4Fe-4S] cluster-binding residues include C174, C179, and C185. Positions 231–234 match the DEAH box motif; that stretch reads DEAH. In terms of domain architecture, Helicase C-terminal spans 458–634; sequence SLGEILLPVI…SRTRDLNKVI (177 aa).

It belongs to the helicase family. DinG subfamily. [4Fe-4S] cluster is required as a cofactor.

The catalysed reaction is Couples ATP hydrolysis with the unwinding of duplex DNA at the replication fork by translocating in the 5'-3' direction. This creates two antiparallel DNA single strands (ssDNA). The leading ssDNA polymer is the template for DNA polymerase III holoenzyme which synthesizes a continuous strand.. It catalyses the reaction ATP + H2O = ADP + phosphate + H(+). Functionally, probably a 5'-3' DNA helicase. In Haemophilus influenzae (strain ATCC 51907 / DSM 11121 / KW20 / Rd), this protein is ATP-dependent DNA helicase YoaA.